A 207-amino-acid polypeptide reads, in one-letter code: Ribosomal RNA large subunit methyltransferase E (207 aa).

Positions 60, 62, 80, 96, and 121 each coordinate S-adenosyl-L-methionine. K161 serves as the catalytic Proton acceptor.

It belongs to the class I-like SAM-binding methyltransferase superfamily. RNA methyltransferase RlmE family.

The protein resides in the cytoplasm. The enzyme catalyses uridine(2552) in 23S rRNA + S-adenosyl-L-methionine = 2'-O-methyluridine(2552) in 23S rRNA + S-adenosyl-L-homocysteine + H(+). Functionally, specifically methylates the uridine in position 2552 of 23S rRNA at the 2'-O position of the ribose in the fully assembled 50S ribosomal subunit. This chain is Ribosomal RNA large subunit methyltransferase E, found in Pseudomonas aeruginosa (strain UCBPP-PA14).